Reading from the N-terminus, the 321-residue chain is Translation initiation factor eIF2B subunit alpha (321 aa).

It belongs to the eIF-2B alpha/beta/delta subunits family. As to quaternary structure, component of the translation initiation factor 2B (eIF2B) complex which is a heterodecamer of two sets of five different subunits: alpha, beta, gamma, delta and epsilon. Subunits alpha, beta and delta comprise a regulatory subcomplex and subunits epsilon and gamma comprise a catalytic subcomplex. Within the complex, the hexameric regulatory complex resides at the center, with the two heterodimeric catalytic subcomplexes bound on opposite sides.

It is found in the cytoplasm. Its subcellular location is the cytosol. Functionally, acts as a component of the translation initiation factor 2B (eIF2B) complex, which catalyzes the exchange of GDP for GTP on eukaryotic initiation factor 2 (eIF2) gamma subunit. Its guanine nucleotide exchange factor activity is repressed when bound to eIF2 complex phosphorylated on the alpha subunit, thereby limiting the amount of methionyl-initiator methionine tRNA available to the ribosome and consequently global translation is repressed. The protein is Translation initiation factor eIF2B subunit alpha (eif2b1) of Dictyostelium discoideum (Social amoeba).